A 440-amino-acid polypeptide reads, in one-letter code: Transposon Ty1-ER2 Gag polyprotein (440 aa).

Polar residues-rich tracts occupy residues 1–10 (MESQQLSNYP), 48–60 (TKANSQQTTTPAS), and 127–152 (QSQFPQYPSSVGTPLSTPSPESGNTF). Disordered stretches follow at residues 1–93 (MESQ…MMTQ), 126–173 (PQSQ…RPPP), and 352–440 (GSRN…PETY). Positions 153-165 (TDSSSADSDMTST) are enriched in low complexity. An RNA-binding region spans residues 299 to 401 (NNGIHINNKV…NSKSKTARAH (103 aa)). The segment covering 402–418 (NVSTSNNSPSTDNDSIS) has biased composition (low complexity). Position 416 is a phosphoserine (Ser416). The span at 419–428 (KSTTEPIQLN) shows a compositional bias: polar residues. The segment covering 429 to 440 (NKHDLHLRPETY) has biased composition (basic and acidic residues).

As to quaternary structure, homotrimer.

It localises to the cytoplasm. Capsid protein (CA) is the structural component of the virus-like particle (VLP), forming the shell that encapsulates the retrotransposons dimeric RNA genome. The particles are assembled from trimer-clustered units and there are holes in the capsid shells that allow for the diffusion of macromolecules. CA also has nucleocapsid-like chaperone activity, promoting primer tRNA(i)-Met annealing to the multipartite primer-binding site (PBS), dimerization of Ty1 RNA and initiation of reverse transcription. This Saccharomyces cerevisiae (strain ATCC 204508 / S288c) (Baker's yeast) protein is Transposon Ty1-ER2 Gag polyprotein (TY1A-ER2).